A 461-amino-acid polypeptide reads, in one-letter code: MKNYRIESDSFGEIQIEEKFYWGAQTQRSLNNFKISKQKMPKILIRALAILKKCAAQVNYEFGDLEYKIATSIDKAIDRILAGEFEDNFPLVVWQTGSGTQTNMNMNEVIASIANEELTGKKGGKFPVHPNDHVNKGQSSNDSFPTAMHIATVLATKQQLIPALNNLLTYLQDKSKDWDKIIKIGRTHLQDATPLTLKQEFSGYITQIEYALERIEDALKKVYLLAQGGTAVGTGINSKIGFDIKFAQKVAEFTQQPFKTAPNKFESLAAHDALVEFSGTLNTIAVSLMKIANDIRLLGSGPRCGLGELHLPENEPGSSIMPGKVNPTQVEALTMVCTQVMGNHVTVTIAGSNGHLELNVFKPVIIYNILQSIELLSDSVNSFVTHCVKGLEPNIARINTLRDKSLMLVTVLNPHIGYDNAAKIAKEAHKYGITLKEAAKKLNFLSEEEFDKIVVPEKMIS.

Substrate-binding positions include 98 to 100 (SGT), 129 to 132 (HPND), 139 to 141 (SSN), and Thr187. The Proton donor/acceptor role is filled by His188. The active site involves Ser318. Substrate is bound by residues Ser319 and 324 to 326 (KVN).

The protein belongs to the class-II fumarase/aspartase family. Fumarase subfamily. In terms of assembly, homotetramer.

The protein localises to the cytoplasm. It carries out the reaction (S)-malate = fumarate + H2O. Its pathway is carbohydrate metabolism; tricarboxylic acid cycle; (S)-malate from fumarate: step 1/1. Functionally, involved in the TCA cycle. Catalyzes the stereospecific interconversion of fumarate to L-malate. The chain is Fumarate hydratase class II from Rickettsia prowazekii (strain Madrid E).